Consider the following 251-residue polypeptide: Small ribosomal subunit protein uS2 (251 aa).

The disordered stretch occupies residues 232–251; sequence LQTGEEEMAAAEGESEQVEA. Acidic residues predominate over residues 235 to 251; it reads GEEEMAAAEGESEQVEA.

It belongs to the universal ribosomal protein uS2 family.

This Geobacter metallireducens (strain ATCC 53774 / DSM 7210 / GS-15) protein is Small ribosomal subunit protein uS2.